The sequence spans 447 residues: MTTILKHLPVGQRIGIAFSGGLDTSAALLWMRQKGAVPYAYTANLGQPDEEDYDAIPRRAMEYGAENARLIDCRKQLVAEGIAAIQCGAFHNTTGGLTYFNTTPLGRAVTGTMLVAAMKEDGVNIWGDGSTYKGNDIERFYRYGLLTNAELQIYKPWLDTDFIDELGGRHEMSEFMIACGFDYKMSVEKAYSTDSNMLGATHEAKDLEYLHSSVKIVNPIMGVKFWDESVKIPAEEVTVRFEQGHPVALNGKTFSDDVEMMLEANRIGGRHGLGMSDQIENRIIEAKSRGIYEAPGMALLHIAYERLLTGIHNEDTIEQYHAHGRQLGRLLYQGRWFDSQALMLRDSLQRWVASQITGEVTLELRRGNDYSILNTVSENLTYKPERLTMEKGDSVFSPDDRIGQLTMRNLDITDTREKLFGYAKTGLLSSSAASGVPQVENLENKGQ.

ATP contacts are provided by residues 17-25 and A43; that span reads AFSGGLDTS. An L-citrulline-binding site is contributed by Y99. The ATP site is built by G129 and T131. Positions 131, 135, and 136 each coordinate L-aspartate. N135 contacts L-citrulline. D136 provides a ligand contact to ATP. 2 residues coordinate L-citrulline: R139 and S192. D194 serves as a coordination point for ATP. T201, E203, and E280 together coordinate L-citrulline.

It belongs to the argininosuccinate synthase family. Type 2 subfamily. In terms of assembly, homotetramer.

The protein resides in the cytoplasm. The catalysed reaction is L-citrulline + L-aspartate + ATP = 2-(N(omega)-L-arginino)succinate + AMP + diphosphate + H(+). It functions in the pathway amino-acid biosynthesis; L-arginine biosynthesis; L-arginine from L-ornithine and carbamoyl phosphate: step 2/3. This Escherichia coli O9:H4 (strain HS) protein is Argininosuccinate synthase.